A 254-amino-acid chain; its full sequence is 5-keto-D-gluconate 5-reductase (254 aa).

Residue 13–37 participates in NADP(+) binding; sequence LITGSAQGIGFLLATGLGKYGAQII. Residue S145 coordinates substrate. Residue Y158 is the Proton acceptor of the active site.

It belongs to the short-chain dehydrogenases/reductases (SDR) family.

It carries out the reaction D-gluconate + NAD(+) = 5-dehydro-D-gluconate + NADH + H(+). The catalysed reaction is D-gluconate + NADP(+) = 5-dehydro-D-gluconate + NADPH + H(+). The protein operates within carbohydrate acid metabolism; L-idonate degradation. Catalyzes the reduction of 5-keto-D-gluconate to D-gluconate, using either NADH or NADPH. Is likely involved in an L-idonate degradation pathway that allows E.coli to utilize L-idonate as the sole carbon and energy source. Is also able to catalyze the reverse reaction in vitro, but the D-gluconate oxidation by the enzyme can only proceed with NAD. The protein is 5-keto-D-gluconate 5-reductase of Escherichia coli O6:H1 (strain CFT073 / ATCC 700928 / UPEC).